A 223-amino-acid chain; its full sequence is DnaJ homolog subfamily B member 9 (223 aa).

The N-terminal stretch at 1–23 is a signal peptide; it reads MATPQSIFIFAICILMITELILA. In terms of domain architecture, J spans 26 to 90; the sequence is SYYDILGVPK…NRRKEYDTLG (65 aa). The segment at 91–223 is divergent targeting domain; sequence HSAFTNGKGQ…VTTYTDCSGQ (133 aa). At Ser133 the chain carries Phosphoserine.

In terms of assembly, interacts with HSPA5/BiP; interaction is direct. Interacts with ERN1/IRE1 (via the luminal region). Interacts with DERL1.

Its subcellular location is the endoplasmic reticulum lumen. Functionally, co-chaperone for Hsp70 protein HSPA5/BiP that acts as a key repressor of the ERN1/IRE1-mediated unfolded protein response (UPR). J domain-containing co-chaperones stimulate the ATPase activity of Hsp70 proteins and are required for efficient substrate recognition by Hsp70 proteins. In the unstressed endoplasmic reticulum, interacts with the luminal region of ERN1/IRE1 and selectively recruits HSPA5/BiP: HSPA5/BiP disrupts the dimerization of the active ERN1/IRE1 luminal region, thereby inactivating ERN1/IRE1. Also involved in endoplasmic reticulum-associated degradation (ERAD) of misfolded proteins. Required for survival of B-cell progenitors and normal antibody production. The protein is DnaJ homolog subfamily B member 9 of Pongo abelii (Sumatran orangutan).